Here is a 277-residue protein sequence, read N- to C-terminus: Undecaprenyl-diphosphatase 1 (277 aa).

The next 8 membrane-spanning stretches (helical) occupy residues 1–21, 39–58, 85–105, 113–133, 147–167, 191–211, 226–246, and 251–271; these read MSLL…FLPI, AGFS…VILY, FWFA…GILF, FKAP…LIII, MTIW…IPGL, SFLL…DDLI, ASFV…LNLV, and LVYF…FQDA.

It belongs to the UppP family.

It localises to the cell membrane. It carries out the reaction di-trans,octa-cis-undecaprenyl diphosphate + H2O = di-trans,octa-cis-undecaprenyl phosphate + phosphate + H(+). Its function is as follows. Catalyzes the dephosphorylation of undecaprenyl diphosphate (UPP). Confers resistance to bacitracin. The sequence is that of Undecaprenyl-diphosphatase 1 from Shouchella clausii (strain KSM-K16) (Alkalihalobacillus clausii).